The primary structure comprises 585 residues: Arginine--tRNA ligase (585 aa).

The 'HIGH' region signature appears at 126-136; sequence PNIAKEMHVGH.

The protein belongs to the class-I aminoacyl-tRNA synthetase family. In terms of assembly, monomer.

It is found in the cytoplasm. The enzyme catalyses tRNA(Arg) + L-arginine + ATP = L-arginyl-tRNA(Arg) + AMP + diphosphate. The polypeptide is Arginine--tRNA ligase (Crocosphaera subtropica (strain ATCC 51142 / BH68) (Cyanothece sp. (strain ATCC 51142))).